The sequence spans 324 residues: Serpentine receptor class gamma-10 (324 aa).

Transmembrane regions (helical) follow at residues serine 39–glycine 59, methionine 69–glycine 89, isoleucine 91–isoleucine 111, threonine 128–methionine 146, isoleucine 155–leucine 175, leucine 206–glycine 226, methionine 246–alanine 266, and isoleucine 279–serine 299.

Belongs to the nematode receptor-like protein srg family.

It localises to the membrane. The chain is Serpentine receptor class gamma-10 (srg-10) from Caenorhabditis elegans.